A 359-amino-acid chain; its full sequence is Cytochrome c oxidase subunit 2 (359 aa).

An N-terminal signal peptide occupies residues 1–28 (MEQQNKRGLKRKALLGGVLGSGGLAMAG). Cys-29 is lipidated: N-palmitoyl cysteine. Residue Cys-29 is the site of S-diacylglycerol cysteine attachment. Transmembrane regions (helical) follow at residues 64-84 (VWVAAWIIGIIMWGLMLTAIF) and 107-127 (VPLELVLTIVPIIIVMVLFFF). His-244, Cys-285, Glu-287, Cys-289, His-293, and Met-296 together coordinate Cu cation. A disordered region spans residues 338–359 (STAPFVSDRTGTRDGENFQTPA).

Belongs to the cytochrome c oxidase subunit 2 family. Associates with subunits I, III and IV to form cytochrome c oxidase. It depends on binuclear copper center (CuA) as a cofactor.

The protein resides in the cell membrane. The enzyme catalyses 4 Fe(II)-[cytochrome c] + O2 + 8 H(+)(in) = 4 Fe(III)-[cytochrome c] + 2 H2O + 4 H(+)(out). Functionally, subunits I and II form the functional core of the enzyme complex. Electrons originating in cytochrome c are transferred via heme a and Cu(A) to the binuclear center formed by heme a3 and Cu(B). This chain is Cytochrome c oxidase subunit 2 (ctaC), found in Corynebacterium efficiens (strain DSM 44549 / YS-314 / AJ 12310 / JCM 11189 / NBRC 100395).